Reading from the N-terminus, the 540-residue chain is NADH-quinone oxidoreductase subunit N (540 aa).

The next 14 helical transmembrane spans lie at 24-44, 54-74, 88-108, 158-178, 184-204, 219-239, 263-283, 295-315, 331-351, 357-377, 385-405, 428-448, 462-482, and 505-525; these read LSPMLIVFGVAVAGVLVEAFL, LVLALGGLTAAFVAVVLLAGT, PTLFLQGTILLISIPAILIIA, APGHTEVFPLTLFAVGGMLLF, LLTMFVALEVLSLPLYLLCGL, YFLLGAFSSAFFLFGVALLYG, ALIGTALLSVGLLFKIGAVPF, PTPITAFMAAATKVAAVGAML, PVMWGVAILTMVVGAVMAVTQ, MLAYSSVAHAGFILTGLVAAN, MFYLLAYGFSTLGAFAVVTLV, VGGVFALFLLAFAGIPLTSGF, GAVPLVLVGVVSSAIAAFFYV, and MFTAAAIAVGVVVTVVLGILP.

The protein belongs to the complex I subunit 2 family. As to quaternary structure, NDH-1 is composed of 14 different subunits. Subunits NuoA, H, J, K, L, M, N constitute the membrane sector of the complex.

It localises to the cell membrane. It catalyses the reaction a quinone + NADH + 5 H(+)(in) = a quinol + NAD(+) + 4 H(+)(out). In terms of biological role, NDH-1 shuttles electrons from NADH, via FMN and iron-sulfur (Fe-S) centers, to quinones in the respiratory chain. The immediate electron acceptor for the enzyme in this species is believed to be a menaquinone. Couples the redox reaction to proton translocation (for every two electrons transferred, four hydrogen ions are translocated across the cytoplasmic membrane), and thus conserves the redox energy in a proton gradient. The sequence is that of NADH-quinone oxidoreductase subunit N from Rhodococcus opacus (strain B4).